A 184-amino-acid chain; its full sequence is Adenine phosphoribosyltransferase (184 aa).

It belongs to the purine/pyrimidine phosphoribosyltransferase family. Homodimer.

It is found in the cytoplasm. The catalysed reaction is AMP + diphosphate = 5-phospho-alpha-D-ribose 1-diphosphate + adenine. The protein operates within purine metabolism; AMP biosynthesis via salvage pathway; AMP from adenine: step 1/1. Functionally, catalyzes a salvage reaction resulting in the formation of AMP, that is energically less costly than de novo synthesis. The sequence is that of Adenine phosphoribosyltransferase from Sphingopyxis alaskensis (strain DSM 13593 / LMG 18877 / RB2256) (Sphingomonas alaskensis).